Reading from the N-terminus, the 236-residue chain is Outer membrane protein P.III (236 aa).

The signal sequence occupies residues 1–22; the sequence is MTKQLKLSALFVALLASGTAVA. 4 tandem repeats follow at residues 69–70, 71–72, 73–74, and 75–76. The interval 69-76 is 4 X 2 AA tandem repeats of X-P; the sequence is VPEPEPAP. Positions 86–223 constitute an OmpA-like domain; that stretch reads YVDETISLSA…RVDVKIRSIV (138 aa). A disulfide bridge connects residues Cys-185 and Cys-208.

It belongs to the outer membrane OOP (TC 1.B.6) superfamily.

It localises to the cell outer membrane. This is Outer membrane protein P.III from Neisseria gonorrhoeae.